Here is a 174-residue protein sequence, read N- to C-terminus: Transcriptional repressor NrdR (174 aa).

Residues 3–34 (CPFCQHNDTRVIDSRVSEDGTTIRRRRECEAC) fold into a zinc finger. Positions 49 to 139 (PTVVKSDGGR…VYRSFQDVAD (91 aa)) constitute an ATP-cone domain.

The protein belongs to the NrdR family. Zn(2+) serves as cofactor.

In terms of biological role, negatively regulates transcription of bacterial ribonucleotide reductase nrd genes and operons by binding to NrdR-boxes. This is Transcriptional repressor NrdR from Xanthomonas campestris pv. campestris (strain 8004).